Here is a 133-residue protein sequence, read N- to C-terminus: Lanmodulin (133 aa).

The N-terminal stretch at 1–21 is a signal peptide; that stretch reads MAFRLSSAVLLAALVAAPAYA. Nd(3+) is bound by residues Asp-35, Asp-37, Asp-39, Thr-41, Glu-46, Asp-59, Asp-61, Asp-63, Thr-65, Glu-70, Asp-84, Asp-86, Asp-88, Thr-90, Glu-95, Asn-108, Asp-110, Asp-112, Thr-114, and Glu-119. 4 consecutive EF-hand domains span residues 35-46, 59-70, 84-95, and 108-119; these read DPDKDGTIDLKE, DPDKDGTLDAKE, DPDNDGTLDKKE, and NPDNDGTIDARE.

As to quaternary structure, monomer.

The protein localises to the periplasm. Functionally, high-affinity lanthanide (Ln)-binding protein. Shows 100 million-fold selectivity for La(3+) over Ca(2+). Binds 3 equiv of Ln(3+) with picomolar affinity and a fourth with approximately micromolar affinity. May be involved in receiving and then transporting lanthanides (such as La(3+), Nd(3+) and Sm(3+)) to a specific periplasmic destination. This Methylorubrum extorquens (strain ATCC 14718 / DSM 1338 / JCM 2805 / NCIMB 9133 / AM1) (Methylobacterium extorquens) protein is Lanmodulin.